The chain runs to 210 residues: Putative 3-methyladenine DNA glycosylase (210 aa).

This sequence belongs to the DNA glycosylase MPG family.

The chain is Putative 3-methyladenine DNA glycosylase from Lactobacillus acidophilus (strain ATCC 700396 / NCK56 / N2 / NCFM).